A 787-amino-acid chain; its full sequence is uncharacterized protein (787 aa).

At Met1 the chain carries N-acetylmethionine. Disordered stretches follow at residues 1-115 (MFDG…NDHK), 130-200 (TNPF…QRSE), and 217-238 (VSSGSSLSLDTSENSDTKASQD). Over residues 36-54 (VPSTIKKSTNIARTSTAET) the composition is skewed to polar residues. Phosphoserine is present on Ser63. Residues 130-142 (TNPFTTSANSNAH) show a composition bias toward polar residues. Over residues 160–169 (SITTSISNNT) the composition is skewed to low complexity. The segment covering 170–184 (TKEEIESNNDSERDS) has biased composition (basic and acidic residues). Residues 218-230 (SSGSSLSLDTSEN) show a composition bias toward low complexity. 10 positions are modified to phosphoserine: Ser254, Ser313, Ser342, Ser345, Ser390, Ser477, Ser492, Ser546, Ser683, and Ser699.

It localises to the cytoplasm. This is an uncharacterized protein from Saccharomyces cerevisiae (strain ATCC 204508 / S288c) (Baker's yeast).